A 160-amino-acid chain; its full sequence is Protein TCP17 (160 aa).

The protein localises to the cytoplasm. The sequence is that of Protein TCP17 from Trypanosoma cruzi.